Here is a 172-residue protein sequence, read N- to C-terminus: Nucleoside-triphosphatase THEP1 (172 aa).

ATP-binding positions include 11–18 (GKPGIGKT) and 101–108 (IILIDEIG).

It belongs to the THEP1 NTPase family.

It catalyses the reaction a ribonucleoside 5'-triphosphate + H2O = a ribonucleoside 5'-diphosphate + phosphate + H(+). Its function is as follows. Has nucleotide phosphatase activity towards ATP, GTP, CTP, TTP and UTP. May hydrolyze nucleoside diphosphates with lower efficiency. This chain is Nucleoside-triphosphatase THEP1, found in Sulfolobus acidocaldarius (strain ATCC 33909 / DSM 639 / JCM 8929 / NBRC 15157 / NCIMB 11770).